Here is a 395-residue protein sequence, read N- to C-terminus: MQADRSMKMGHALNPFSTSAPLDATAGPSLIPDLITRIPWPRWTLFIAILAAGVLLVSCLLCVICCYCHRHRHRKQPKDKETVGLGSARNSTTTHLVQPDVDCLEPCSGGDQQWGRLLLSLEYDFGSQEIRVGLRQAGNLKAEGTADPYAWVSVSTQSGRRHETKVHRGTLSPMFEETCCFLVPPAELPKATLKVQLWDFKRFSEHEPLGELQLPLGTVDLQHVLESWYQLGPPGTTEPEQMGELCFSLRYVPSSGSLTVVVLEARGLNPGLAEAYVKIQLMLNQRKWKKSKTSSKKGTTTPYFNEAFVFLVPVSQLQSVDLVLAVWARGLQLRTEPVGKVLLGSRASGQPLQHWADMLAHARRPIAQWHHLRSPREVDRVLALQPRLPLLRPRS.

Over 1–44 the chain is Extracellular; it reads MQADRSMKMGHALNPFSTSAPLDATAGPSLIPDLITRIPWPRWT. A helical; Signal-anchor for type III membrane protein membrane pass occupies residues 45 to 65; that stretch reads LFIAILAAGVLLVSCLLCVIC. At 66–395 the chain is on the cytoplasmic side; it reads CYCHRHRHRK…PRLPLLRPRS (330 aa). C2 domains follow at residues 113-229 and 241-370; these read QWGR…ESWY and QMGE…AQWH.

The protein belongs to the synaptotagmin family. Homodimer or homooligomer. Homodimerization and homooligomerization do not depend on Ca(2+). Interacts with SYNCRIP isoform 2 C-terminus. Binds inositol 1,3,4,5-tetrakisphosphate (IP4). Binds to AP2 in a Ca(2+)-independent manner. Interacts with STX1A, STX1B and STX2; the interaction is Ca(2+)-dependent. Ubiquitous. Detected in testis and brain. Expressed in primary neurons, neuroendocrine and endocrine cells.

The protein localises to the cytoplasm. It is found in the cell membrane. Its subcellular location is the cytoplasmic vesicle. It localises to the secretory vesicle. The protein resides in the acrosome. Its function is as follows. Involved in the trafficking and exocytosis of secretory vesicles in non-neuronal tissues. Mediates Ca(2+)-regulation of exocytosis acrosomal reaction in sperm. May mediate Ca(2+)-regulation of exocytosis in insulin secreted cells. The polypeptide is Synaptotagmin-8 (Syt8) (Mus musculus (Mouse)).